We begin with the raw amino-acid sequence, 453 residues long: MEASLLKKNQSIELTIEDLTHDGSGVGKIDGYPFFIPNTLPGEKVTAKIIKLNKNYGFARMENIETVSANRVEPPCAVYSKCGGCSLQHLSYDGQLEFKRNQVEETMKRIGKLNVEVPETLGMENPWRYRNKSQVPVGFVNGKLTAGFYQKRSHAIIDMSTCLIHNEQGDFAVQKTREILAKYGTEPYDEQTGKGDIRHIMTRFAHTTGQLMIVLVTTKERMPFKEEIVRDLVEQLELTSIVQNINPHKTNVIFGDRTKTLWGKDIIEDTIHGIRFAISARSFYQVNPLQTEVLYQQAIDAAELTGEETVIDAYCGIGSISLCLAKKAKHVYGVEIVDQAIQDARANAELNELANTTFETGKAEEVIPSWYKAGIVADVLVVDPPRKGCDEKLLETILAMKPKKVVYVSCNPGTLARDMKILTDGGYVAKKVQPVDMFPMTTHIEAVTVLHLN.

A TRAM domain is found at 5–63 (LLKKNQSIELTIEDLTHDGSGVGKIDGYPFFIPNTLPGEKVTAKIIKLNKNYGFARMEN). 4 residues coordinate [4Fe-4S] cluster: Cys76, Cys82, Cys85, and Cys162. S-adenosyl-L-methionine-binding residues include Gln285, Tyr314, Glu335, and Asp383. The active-site Nucleophile is the Cys410.

It belongs to the class I-like SAM-binding methyltransferase superfamily. RNA M5U methyltransferase family.

This is an uncharacterized protein from Listeria monocytogenes serovar 1/2a (strain ATCC BAA-679 / EGD-e).